The following is an 87-amino-acid chain: Large ribosomal subunit protein bL27 (87 aa).

Residues 1–21 are disordered; it reads MAHKKGQGSTQNNRDSAGRRL.

This sequence belongs to the bacterial ribosomal protein bL27 family.

The sequence is that of Large ribosomal subunit protein bL27 from Nautilia profundicola (strain ATCC BAA-1463 / DSM 18972 / AmH).